A 71-amino-acid polypeptide reads, in one-letter code: Small ribosomal subunit protein bS21 (71 aa).

A disordered region spans residues His37–Tyr71. A compositionally biased stretch (basic residues) spans Arg45–Tyr71.

It belongs to the bacterial ribosomal protein bS21 family.

The sequence is that of Small ribosomal subunit protein bS21 from Alkalilimnicola ehrlichii (strain ATCC BAA-1101 / DSM 17681 / MLHE-1).